The sequence spans 719 residues: Phenylalanine--tRNA ligase beta subunit, chloroplastic (719 aa).

The B5 domain maps to 318–403 (DHALNINLSI…RIYGYHKFRS (86 aa)). Residues aspartate 381, aspartate 387, glutamate 390, and glutamate 391 each coordinate Mg(2+). An FDX-ACB domain is found at 625–718 (SKYPSIIRDL…IVKQLNLKIR (94 aa)).

It belongs to the phenylalanyl-tRNA synthetase beta subunit family. Type 1 subfamily. In terms of assembly, tetramer of two alpha and two beta subunits. It depends on Mg(2+) as a cofactor.

It is found in the plastid. The protein resides in the chloroplast. It catalyses the reaction tRNA(Phe) + L-phenylalanine + ATP = L-phenylalanyl-tRNA(Phe) + AMP + diphosphate + H(+). The protein is Phenylalanine--tRNA ligase beta subunit, chloroplastic of Pyropia yezoensis (Susabi-nori).